A 292-amino-acid polypeptide reads, in one-letter code: Protease HtpX (292 aa).

Helical transmembrane passes span 5–25 (IFLFLLTNVAVLMLAGVVMSV) and 34–54 (SGLLVMAAIFGFGGSFISLLL). Zn(2+) is bound at residue His-140. The active site involves Glu-141. Position 144 (His-144) interacts with Zn(2+). 2 consecutive transmembrane segments (helical) span residues 155–175 (LLQGVLNTFVIVLARVVGGII) and 193–213 (IIVFVLEMVFGMFATMIAMWF). A Zn(2+)-binding site is contributed by Glu-218.

Belongs to the peptidase M48B family. Requires Zn(2+) as cofactor.

Its subcellular location is the cell inner membrane. The polypeptide is Protease HtpX (Xanthomonas oryzae pv. oryzae (strain MAFF 311018)).